Reading from the N-terminus, the 445-residue chain is Zinc finger protein SHOOT GRAVITROPISM 5 (445 aa).

The segment covering 22-31 (SSSDPFLSSS) has biased composition (low complexity). Residues 22-59 (SSSDPFLSSSENGVTTTNTSTQKRKRRPAGTPDPDAEV) form a disordered region. The segment covering 32 to 42 (ENGVTTTNTST) has biased composition (polar residues). 3 consecutive C2H2-type zinc fingers follow at residues 73-95 (YICEICNQGFQRDQNLQMHRRRH), 115-145 (YVCPEPTCLHHNPCHALGDLVGIKKHFRRKH), and 151-178 (WVCERCSKGYAVQSDYKAHLKTCGTRGH). Cys153, Cys156, His169, Cys173, Cys180, Cys182, His195, and Cys199 together coordinate Zn(2+). The CCHC-type 2; atypical zinc-finger motif lies at 178 to 201 (HSCDCGRVFSRVESFIEHQDNCSA). Residues 188–200 (RVESFIEHQDNCS) form an SHR-binding region. Disordered stretches follow at residues 203–253 (RVHR…LEGR) and 281–314 (SSNQNPNQENQQQKVKEPSHHHNHNHDTTNLNLS). Residues 214–248 (TAVTVPACSSRTASTVSTPSSETNYGGTVAVTTPQ) show a composition bias toward polar residues. Residues 281-293 (SSNQNPNQENQQQ) show a composition bias toward low complexity. Residues 340-397 (MKIAMKEKAYAEEAKREAKRQREIAENEFANAKKIRQKAQAELERAKFLKEQSMKKIS) are a coiled coil.

As to expression, mainly expressed in the endodermis, the gravity-sensing tissue in inflorescence stems. Mostly present in stems and flowers, and, to a lower extent, in seedlings, hypocotyls, roots and the shoot apical meristem (SAM).

It is found in the nucleus. In terms of biological role, transcription factor involved in inflorescence stems gravitropism, probably by regulating starch accumulation in amyloplasts of graviperceptive cells. Required for stem circumnutation movements. Regulates lateral organ morphogenesis and gravitropic responses. Acts cooperatively with IDD16 to control silique and branche orientation. Involved in the establishment of auxin gradients through the regulation of auxin biosynthesis and transport. The chain is Zinc finger protein SHOOT GRAVITROPISM 5 from Arabidopsis thaliana (Mouse-ear cress).